Here is a 408-residue protein sequence, read N- to C-terminus: Histidine--tRNA ligase (408 aa).

This sequence belongs to the class-II aminoacyl-tRNA synthetase family. In terms of assembly, homodimer.

The protein resides in the cytoplasm. It catalyses the reaction tRNA(His) + L-histidine + ATP = L-histidyl-tRNA(His) + AMP + diphosphate + H(+). This chain is Histidine--tRNA ligase, found in Wolbachia pipientis wMel.